Consider the following 459-residue polypeptide: Putrescine aminotransferase (459 aa).

Pyridoxal 5'-phosphate contacts are provided by residues 150 to 151 (GT) and Q274. K300 carries the post-translational modification N6-(pyridoxal phosphate)lysine. Residue T332 coordinates pyridoxal 5'-phosphate.

The protein belongs to the class-III pyridoxal-phosphate-dependent aminotransferase family. Putrescine aminotransferase subfamily. Requires pyridoxal 5'-phosphate as cofactor.

The enzyme catalyses an alkane-alpha,omega-diamine + 2-oxoglutarate = an omega-aminoaldehyde + L-glutamate. It catalyses the reaction putrescine + 2-oxoglutarate = 1-pyrroline + L-glutamate + H2O. The catalysed reaction is cadaverine + 2-oxoglutarate = 5-aminopentanal + L-glutamate. The protein operates within amine and polyamine degradation; putrescine degradation; 4-aminobutanal from putrescine (transaminase route): step 1/1. Its function is as follows. Catalyzes the aminotransferase reaction from putrescine to 2-oxoglutarate, leading to glutamate and 4-aminobutanal, which spontaneously cyclizes to form 1-pyrroline. This is the first step in one of two pathways for putrescine degradation, where putrescine is converted into 4-aminobutanoate (gamma-aminobutyrate or GABA) via 4-aminobutanal. Also functions as a cadaverine transaminase in a a L-lysine degradation pathway to succinate that proceeds via cadaverine, glutarate and L-2-hydroxyglutarate. The sequence is that of Putrescine aminotransferase from Escherichia coli O7:K1 (strain IAI39 / ExPEC).